Consider the following 411-residue polypeptide: LIM domain-binding protein 1 (411 aa).

Ser2 is subject to N-acetylserine. Thr61 carries the phosphothreonine modification. Phosphoserine is present on residues Ser265 and Ser302. 2 disordered regions span residues 284 to 330 (PPAE…TFAL) and 367 to 411 (DAAN…QASQ). A compositionally biased stretch (low complexity) spans 302-318 (SGGSTMSSGGGNTNNSN). The region spanning 336–375 (DVMVVGEPTLMGGEFGDEDERLITRLENTQFDAANGIDDE) is the LIM interaction domain (LID) domain.

Belongs to the LDB family. As to quaternary structure, interacts with ESR1. Forms homodimers and heterodimers. Interacts with and activates LHX1/LIM1. Interacts with the LIM domains of ISL1 and LMO2. Can assemble in a complex with LMO2 and TAL1/SCL but does not interact with TAL1/SCL directly. Strongly interacts with the LIM2 domain of LMX1A and more weakly with the LIM1 domain. Homodimerization is not required for, and does not effect, LMX1A-binding. Component of a nuclear TAL-1 complex composed at least of CBFA2T3, LDB1, TAL1 and TCF3. Interacts with LHX6 and LHX9. At neuronal promoters, forms a complex with LHX3 involved in the specification of interneurons, in motor neurons, it is displaced by ISL1 to form a ternary complex in which ISL1 contacts both LHX3 and LDB1. Interacts with SLK; leading to negatively regulate SLK kinase activity. Interacts with YWHAZ. Interacts with PRDM1/BLIMP1. Interacts with LMO4. Interacts with RLIM/RNF12; the interaction inhibits the ubiquitination of LMO proteins. Ubiquitinated by RLIM/RNF12, leading to its degradation by the proteasome. In terms of tissue distribution, expressed in multiple adult tissues including heart, brain, liver, kidney, testis, lung and muscle, with expression highest in the pituitary gland and skin.

The protein localises to the nucleus. Functionally, binds to the LIM domain of a wide variety of LIM domain-containing transcription factors. May regulate the transcriptional activity of LIM-containing proteins by determining specific partner interactions. Plays a role in the development of interneurons and motor neurons in cooperation with LHX3 and ISL1. Acts synergistically with LHX1/LIM1 in axis formation and activation of gene expression. Acts with LMO2 in the regulation of red blood cell development, maintaining erythroid precursors in an immature state. The sequence is that of LIM domain-binding protein 1 (Ldb1) from Mus musculus (Mouse).